We begin with the raw amino-acid sequence, 358 residues long: 3-isopropylmalate dehydrogenase (358 aa).

Position 77–90 (77–90 (GPKWTHLPPDQQPE)) interacts with NAD(+). R98, R108, R137, and D226 together coordinate substrate. Residues D226, D250, and D254 each coordinate Mg(2+). 284–296 (GSAPDIAGKGIAN) lines the NAD(+) pocket.

This sequence belongs to the isocitrate and isopropylmalate dehydrogenases family. LeuB type 1 subfamily. As to quaternary structure, homodimer. Mg(2+) is required as a cofactor. The cofactor is Mn(2+).

The protein resides in the cytoplasm. It carries out the reaction (2R,3S)-3-isopropylmalate + NAD(+) = 4-methyl-2-oxopentanoate + CO2 + NADH. Its pathway is amino-acid biosynthesis; L-leucine biosynthesis; L-leucine from 3-methyl-2-oxobutanoate: step 3/4. In terms of biological role, catalyzes the oxidation of 3-carboxy-2-hydroxy-4-methylpentanoate (3-isopropylmalate) to 3-carboxy-4-methyl-2-oxopentanoate. The product decarboxylates to 4-methyl-2 oxopentanoate. The sequence is that of 3-isopropylmalate dehydrogenase from Mannheimia succiniciproducens (strain KCTC 0769BP / MBEL55E).